The chain runs to 89 residues: Small ribosomal subunit protein uS15 (89 aa).

It belongs to the universal ribosomal protein uS15 family. In terms of assembly, part of the 30S ribosomal subunit. Forms a bridge to the 50S subunit in the 70S ribosome, contacting the 23S rRNA.

One of the primary rRNA binding proteins, it binds directly to 16S rRNA where it helps nucleate assembly of the platform of the 30S subunit by binding and bridging several RNA helices of the 16S rRNA. In terms of biological role, forms an intersubunit bridge (bridge B4) with the 23S rRNA of the 50S subunit in the ribosome. This is Small ribosomal subunit protein uS15 from Nitrosococcus oceani (strain ATCC 19707 / BCRC 17464 / JCM 30415 / NCIMB 11848 / C-107).